We begin with the raw amino-acid sequence, 1114 residues long: Isoleucine--tRNA ligase (1114 aa).

The 'HIGH' region motif lies at 61–71; the sequence is PTANGQPGTHH. The short motif at 640 to 644 is the 'KMSKS' region element; that stretch reads KMSKH. Lys643 provides a ligand contact to ATP.

This sequence belongs to the class-I aminoacyl-tRNA synthetase family. IleS type 2 subfamily. As to quaternary structure, monomer. Zn(2+) is required as a cofactor.

Its subcellular location is the cytoplasm. It catalyses the reaction tRNA(Ile) + L-isoleucine + ATP = L-isoleucyl-tRNA(Ile) + AMP + diphosphate. In terms of biological role, catalyzes the attachment of isoleucine to tRNA(Ile). As IleRS can inadvertently accommodate and process structurally similar amino acids such as valine, to avoid such errors it has two additional distinct tRNA(Ile)-dependent editing activities. One activity is designated as 'pretransfer' editing and involves the hydrolysis of activated Val-AMP. The other activity is designated 'posttransfer' editing and involves deacylation of mischarged Val-tRNA(Ile). The polypeptide is Isoleucine--tRNA ligase (Cutibacterium acnes (strain DSM 16379 / KPA171202) (Propionibacterium acnes)).